The chain runs to 153 residues: Aspartate carbamoyltransferase regulatory chain (153 aa).

Positions 108, 113, 137, and 140 each coordinate Zn(2+).

This sequence belongs to the PyrI family. In terms of assembly, contains catalytic and regulatory chains. Zn(2+) is required as a cofactor.

Its function is as follows. Involved in allosteric regulation of aspartate carbamoyltransferase. This Methanosphaera stadtmanae (strain ATCC 43021 / DSM 3091 / JCM 11832 / MCB-3) protein is Aspartate carbamoyltransferase regulatory chain.